Here is a 137-residue protein sequence, read N- to C-terminus: Large ribosomal subunit protein uL16 (137 aa).

This sequence belongs to the universal ribosomal protein uL16 family. In terms of assembly, part of the 50S ribosomal subunit.

Binds 23S rRNA and is also seen to make contacts with the A and possibly P site tRNAs. In Pseudomonas putida (strain ATCC 47054 / DSM 6125 / CFBP 8728 / NCIMB 11950 / KT2440), this protein is Large ribosomal subunit protein uL16.